Here is a 476-residue protein sequence, read N- to C-terminus: Ribulose bisphosphate carboxylase large chain (476 aa).

Residues 1–2 constitute a propeptide that is removed on maturation; that stretch reads MS. Pro-3 carries the post-translational modification N-acetylproline. An N6,N6,N6-trimethyllysine modification is found at Lys-14. Substrate is bound by residues Asn-123 and Thr-173. Residue Lys-175 is the Proton acceptor of the active site. Residue Lys-177 coordinates substrate. Mg(2+) is bound by residues Lys-201, Asp-203, and Glu-204. Lys-201 is subject to N6-carboxylysine. The active-site Proton acceptor is His-294. 3 residues coordinate substrate: Arg-295, His-327, and Ser-379.

It belongs to the RuBisCO large chain family. Type I subfamily. As to quaternary structure, heterohexadecamer of 8 large chains and 8 small chains; disulfide-linked. The disulfide link is formed within the large subunit homodimers. Mg(2+) serves as cofactor. Post-translationally, the disulfide bond which can form in the large chain dimeric partners within the hexadecamer appears to be associated with oxidative stress and protein turnover.

The protein resides in the plastid. It localises to the chloroplast. It catalyses the reaction 2 (2R)-3-phosphoglycerate + 2 H(+) = D-ribulose 1,5-bisphosphate + CO2 + H2O. The catalysed reaction is D-ribulose 1,5-bisphosphate + O2 = 2-phosphoglycolate + (2R)-3-phosphoglycerate + 2 H(+). RuBisCO catalyzes two reactions: the carboxylation of D-ribulose 1,5-bisphosphate, the primary event in carbon dioxide fixation, as well as the oxidative fragmentation of the pentose substrate in the photorespiration process. Both reactions occur simultaneously and in competition at the same active site. The chain is Ribulose bisphosphate carboxylase large chain from Sorghum bicolor (Sorghum).